A 160-amino-acid chain; its full sequence is MRVAVIAVGRLKQGPERELADRYFERFDEAGRKLGFRELSIHEIPESRARDAATRMAEEAAAIGAYIPDKSILVALDERGQNLDSTVFARHLGRWRDEGAGHTIFVIGGADGLSPELRRKAKLAIAFGSATWPHQMVRVMLLEQLYRAATILAGHPYHRA.

S-adenosyl-L-methionine-binding residues include L76 and G108.

Belongs to the RNA methyltransferase RlmH family. In terms of assembly, homodimer.

The protein resides in the cytoplasm. The catalysed reaction is pseudouridine(1915) in 23S rRNA + S-adenosyl-L-methionine = N(3)-methylpseudouridine(1915) in 23S rRNA + S-adenosyl-L-homocysteine + H(+). Its function is as follows. Specifically methylates the pseudouridine at position 1915 (m3Psi1915) in 23S rRNA. This Bradyrhizobium diazoefficiens (strain JCM 10833 / BCRC 13528 / IAM 13628 / NBRC 14792 / USDA 110) protein is Ribosomal RNA large subunit methyltransferase H.